The chain runs to 1101 residues: Error-prone DNA polymerase (1101 aa).

The disordered stretch occupies residues 1055 to 1101 (ADLGHPMDSAVGQTTPQTDSAPRPRPQPRAMHPREQAKRLFPSRDFH). A compositionally biased stretch (polar residues) spans 1065–1074 (VGQTTPQTDS). A compositionally biased stretch (basic and acidic residues) spans 1086–1101 (HPREQAKRLFPSRDFH).

The protein belongs to the DNA polymerase type-C family. DnaE2 subfamily.

The protein localises to the cytoplasm. The enzyme catalyses DNA(n) + a 2'-deoxyribonucleoside 5'-triphosphate = DNA(n+1) + diphosphate. Its function is as follows. DNA polymerase involved in damage-induced mutagenesis and translesion synthesis (TLS). It is not the major replicative DNA polymerase. The sequence is that of Error-prone DNA polymerase from Ruegeria pomeroyi (strain ATCC 700808 / DSM 15171 / DSS-3) (Silicibacter pomeroyi).